A 365-amino-acid polypeptide reads, in one-letter code: MSLEEKKKTESKEKDKALSLVLGQIERNFGRGSIMRLGDASRMKVETISTGALTLDLALGGGYPKGRVVEVYGPESSGKTTLTLHAIAEVQKNGGVAAFVDAEHALDPVYAASLGVDVENLLVSQPDTGEMALEIVDQLIRSSAVDLVVVDSVAALTPRAEIEGEMGDHVIGSQARLMSQAMRKITGNIGKSGCTVIFLNQLRLKIGVTYGNPETTTGGNALKFYASVRLDIRRIQTLKRGTEEYGIRAKVKVAKNKVAPPFRIAEFDILFGKGISTTGCLLDLAEETNIIIRRGAWYSYEGENIGQGRDNTIIWLDQNLEIRNKVESMVKEKLTEGTEVSSNSMKALNSNPANTIAVNDIKTVA.

Residue glycine 73–threonine 80 coordinates ATP.

This sequence belongs to the RecA family.

Its subcellular location is the cytoplasm. Its function is as follows. Can catalyze the hydrolysis of ATP in the presence of single-stranded DNA, the ATP-dependent uptake of single-stranded DNA by duplex DNA, and the ATP-dependent hybridization of homologous single-stranded DNAs. It interacts with LexA causing its activation and leading to its autocatalytic cleavage. This Prochlorococcus marinus (strain AS9601) protein is Protein RecA.